The sequence spans 505 residues: Sucrose porin (505 aa).

Positions 1–22 (MYRKSTLAMLIALLTSAASAHA) are cleaved as a signal peptide. A disordered region spans residues 44–87 (ENRAQTAENRAGAAEKKVQQLTAQQQKNQNSTQEVAQRTARLEK). The span at 62–72 (QQLTAQQQKNQ) shows a compositional bias: low complexity.

This sequence belongs to the porin LamB (TC 1.B.3) family. Homotrimer.

It localises to the cell outer membrane. Porin for sucrose uptake. The chain is Sucrose porin (scrY) from Salmonella typhimurium.